The chain runs to 201 residues: Small ribosomal subunit protein uS4c (201 aa).

Positions 89–149 (MRLDNILFRL…DKPKSGALIK (61 aa)) constitute an S4 RNA-binding domain.

It belongs to the universal ribosomal protein uS4 family. In terms of assembly, part of the 30S ribosomal subunit. Contacts protein S5. The interaction surface between S4 and S5 is involved in control of translational fidelity.

Its subcellular location is the plastid. In terms of biological role, one of the primary rRNA binding proteins, it binds directly to 16S rRNA where it nucleates assembly of the body of the 30S subunit. Its function is as follows. With S5 and S12 plays an important role in translational accuracy. The protein is Small ribosomal subunit protein uS4c (rps4) of Cuscuta reflexa (Southern Asian dodder).